The sequence spans 474 residues: Protein anachronism (474 aa).

The N-terminal stretch at 1 to 33 is a signal peptide; sequence MASAMRGEKCERSRIRELVLILSLITMAGDSRA. Residues Asn54, Asn62, Asn73, Asn116, and Asn144 are each glycosylated (N-linked (GlcNAc...) asparagine). Residues 173 to 195 form a disordered region; it reads NPGQTREHNPGQASTQPISTENP. Polar residues predominate over residues 183–195; the sequence is GQASTQPISTENP. The N-linked (GlcNAc...) asparagine glycan is linked to Asn342. Polar residues predominate over residues 359–372; sequence FIESTTSNSPTIDN. The tract at residues 359 to 474 is disordered; the sequence is FIESTTSNSP…HHRIPAHKQE (116 aa). Basic residues-rich tracts occupy residues 390–400 and 437–474; these read LVHHRRHHHNH and NHHR…HKQE.

In terms of tissue distribution, synthesized in some glial cells and secreted.

The protein resides in the secreted. Functionally, negatively regulates proliferation of neuronal precursor cells, thereby controlling the timing of postembryonic neurogenesis. In Drosophila melanogaster (Fruit fly), this protein is Protein anachronism (ana).